Reading from the N-terminus, the 466-residue chain is Argininosuccinate lyase (466 aa).

Positions 27, 114, and 159 each coordinate 2-(N(omega)-L-arginino)succinate. His-160 (proton acceptor) is an active-site residue. Ser-281 (proton donor) is an active-site residue. Asn-289, Tyr-321, Gln-326, and Lys-329 together coordinate 2-(N(omega)-L-arginino)succinate.

It belongs to the lyase 1 family. Argininosuccinate lyase subfamily. Homotetramer. The N-terminus is blocked. Eye lens.

The catalysed reaction is 2-(N(omega)-L-arginino)succinate = fumarate + L-arginine. It functions in the pathway amino-acid biosynthesis; L-arginine biosynthesis; L-arginine from L-ornithine and carbamoyl phosphate: step 3/3. Functionally, delta crystallin, the principal crystallin in embryonic lens, is found only in birds and reptiles. This protein also functions as an enzymatically active argininosuccinate lyase, but it has a low activity. The protein is Argininosuccinate lyase (ASL) of Columba livia (Rock dove).